Consider the following 136-residue polypeptide: Ribonuclease VapC1 (136 aa).

The region spanning 18–129 (ILVDTSVLID…KKHFERLKEF (112 aa)) is the PINc domain. Mg(2+) is bound by residues Asp21 and Asp101.

The protein belongs to the PINc/VapC protein family. Mg(2+) serves as cofactor.

Toxic component of a type II toxin-antitoxin (TA) system. An RNase. Its cognate antitoxin is VapB1. The chain is Ribonuclease VapC1 from Methanocaldococcus jannaschii (strain ATCC 43067 / DSM 2661 / JAL-1 / JCM 10045 / NBRC 100440) (Methanococcus jannaschii).